The sequence spans 192 residues: 4'-phosphopantetheinyl transferase AcpT (192 aa).

Belongs to the P-Pant transferase superfamily. Gsp/Sfp/HetI/AcpT family.

It carries out the reaction apo-[ACP] + CoA = holo-[ACP] + adenosine 3',5'-bisphosphate + H(+). May be involved in an alternative pathway for phosphopantetheinyl transfer and holo-ACP synthesis. The native apo-protein substrate is unknown. The protein is 4'-phosphopantetheinyl transferase AcpT (acpT) of Salmonella typhi.